The chain runs to 281 residues: Cell growth regulator with EF hand domain protein 1 (281 aa).

Positions Met-1–Ala-21 are cleaved as a signal peptide. 2 EF-hand domains span residues Asp-71–Pro-106 and Pro-115–Thr-150. Ca(2+) contacts are provided by Asp-84, Asp-86, Asn-88, Gln-90, Glu-95, Asp-128, Asp-130, Asp-132, and Glu-139. The disordered stretch occupies residues Lys-148–Ile-281. The segment covering Leu-168–Gly-183 has biased composition (polar residues). Over residues Thr-184 to Val-213 the composition is skewed to basic and acidic residues. Residues Ser-217 and Ser-228 each carry the phosphoserine modification. Over residues Glu-237 to Leu-256 the composition is skewed to basic and acidic residues.

Probably digested extracellularly by an unknown serine protease generating extremely hydrophobic bioactive peptides.

It is found in the secreted. Functionally, mediates cell-cell adhesion in a calcium-dependent manner. Able to inhibit growth in several cell lines. The chain is Cell growth regulator with EF hand domain protein 1 from Mus musculus (Mouse).